Consider the following 393-residue polypeptide: UDP-glucose 6-dehydrogenase (393 aa).

Positions 11, 31, 36, 85, 120, and 147 each coordinate NAD(+). Substrate contacts are provided by residues Glu-143–Glu-147, Lys-199, Asn-203, Tyr-244–Ser-248, and Gly-252. Tyr-254 is an NAD(+) binding site. Catalysis depends on Cys-255, which acts as the Nucleophile. Position 258 (Lys-258) interacts with NAD(+). Residue Lys-309 coordinates substrate. Position 316 (Arg-316) interacts with NAD(+).

This sequence belongs to the UDP-glucose/GDP-mannose dehydrogenase family. In terms of assembly, homodimer.

The enzyme catalyses UDP-alpha-D-glucose + 2 NAD(+) + H2O = UDP-alpha-D-glucuronate + 2 NADH + 3 H(+). It functions in the pathway nucleotide-sugar biosynthesis; UDP-alpha-D-glucuronate biosynthesis; UDP-alpha-D-glucuronate from UDP-alpha-D-glucose: step 1/1. It participates in capsule biogenesis; capsule polysaccharide biosynthesis. In terms of biological role, catalyzes the formation of UDP-glucuronic acid which is required for capsular polysaccharide synthesis. Does not catalyze the formation of glucuronamide moiety of the capsular polysaccharide. This chain is UDP-glucose 6-dehydrogenase, found in Campylobacter jejuni subsp. jejuni serotype O:2 (strain ATCC 700819 / NCTC 11168).